Reading from the N-terminus, the 450-residue chain is Tol-Pal system protein TolB (450 aa).

The first 47 residues, 1–47, serve as a signal peptide directing secretion; sequence MRKLWAPNWLSAKRHHANQAATRLIGRHALMAWLAAALALSAGAAQA.

It belongs to the TolB family. As to quaternary structure, the Tol-Pal system is composed of five core proteins: the inner membrane proteins TolA, TolQ and TolR, the periplasmic protein TolB and the outer membrane protein Pal. They form a network linking the inner and outer membranes and the peptidoglycan layer.

The protein resides in the periplasm. Its function is as follows. Part of the Tol-Pal system, which plays a role in outer membrane invagination during cell division and is important for maintaining outer membrane integrity. The polypeptide is Tol-Pal system protein TolB (Cupriavidus pinatubonensis (strain JMP 134 / LMG 1197) (Cupriavidus necator (strain JMP 134))).